Reading from the N-terminus, the 356-residue chain is uncharacterized protein (356 aa).

Belongs to the NAD(P)-dependent epimerase/dehydratase family. NAD(+) is required as a cofactor. The cofactor is NADP(+).

Its function is as follows. Putative nucleotide sugar epimerase/dehydrogenase. This is an uncharacterized protein from Sinorhizobium fredii (strain NBRC 101917 / NGR234).